The primary structure comprises 158 residues: Cytochrome c2 (158 aa).

The residue at position 1 (Gln1) is a Pyrrolidone carboxylic acid. The heme c site is built by Cys18, Cys21, His22, and Met102. The tract at residues 129–158 (AEAAPAADAAAPAAADAAAPAEPAAEGAAT) is disordered.

Belongs to the cytochrome c family. Post-translationally, binds 1 heme c group covalently per subunit.

The protein resides in the periplasm. In terms of biological role, cytochrome c2 is found mainly in purple, non-sulfur, photosynthetic bacteria where it functions as the electron donor to the oxidized bacteriochlorophyll in the photophosphorylation pathway. However, it may also have a role in the respiratory chain and is found in some non-photosynthetic bacteria. This is Cytochrome c2 from Fuscovulum blasticum (Rhodobacter blasticus).